The chain runs to 108 residues: Replication initiation control protein YabA (108 aa).

Zn(2+)-binding residues include His82, Cys84, Cys98, and Cys101.

The protein belongs to the YabA family. Homotetramer. Interacts with both DnaA and DnaN, acting as a bridge between these two proteins. It depends on Zn(2+) as a cofactor.

The protein localises to the cytoplasm. Its subcellular location is the nucleoid. In terms of biological role, involved in control of chromosome replication initiation. Inhibits the cooperative binding of DnaA to the oriC region, thus negatively regulating initiation of chromosome replication. Inhibits the ability of DnaA-ATP to form a helix on DNA; does not disassemble preformed DnaA-DNA helices. Decreases the residence time of DnaA on the chromosome at its binding sites (oriC, replication forks and promoter-binding sites). Tethers DnaA to the replication machinery via the DNA polymerase beta sliding clamp subunit (dnaN). Associates with oriC and other DnaA targets on the chromosome in a DnaA-dependent manner. This is Replication initiation control protein YabA from Streptococcus agalactiae serotype Ia (strain ATCC 27591 / A909 / CDC SS700).